We begin with the raw amino-acid sequence, 791 residues long: Endonuclease MutS2 (791 aa).

Residue 339–346 (GPNTGGKT) coordinates ATP. The 76-residue stretch at 715–790 (LDLRGERYET…GSGVTIADLK (76 aa)) folds into the Smr domain.

This sequence belongs to the DNA mismatch repair MutS family. MutS2 subfamily. In terms of assembly, homodimer. Binds to stalled ribosomes, contacting rRNA.

In terms of biological role, endonuclease that is involved in the suppression of homologous recombination and thus may have a key role in the control of bacterial genetic diversity. Functionally, acts as a ribosome collision sensor, splitting the ribosome into its 2 subunits. Detects stalled/collided 70S ribosomes which it binds and splits by an ATP-hydrolysis driven conformational change. Acts upstream of the ribosome quality control system (RQC), a ribosome-associated complex that mediates the extraction of incompletely synthesized nascent chains from stalled ribosomes and their subsequent degradation. Probably generates substrates for RQC. This is Endonuclease MutS2 from Halothermothrix orenii (strain H 168 / OCM 544 / DSM 9562).